A 164-amino-acid chain; its full sequence is MRCPKCNYHKSSVVDSRQAEDGNTIRRRRECEQCHTRFTTFERVEELPLLVIKKDGTREQFSRDKILNGVVQSAQKRPVSSTDIENVISRIEQEVRTTYENEVSSTAIGNLVMDELAELDEITYVRFASVYKSFKDVDEIEELLQQITNRVRGKKKRLNNDETN.

A zinc finger lies at 3–34 (CPKCNYHKSSVVDSRQAEDGNTIRRRRECEQC). Residues 49–139 (LLVIKKDGTR…VYKSFKDVDE (91 aa)) enclose the ATP-cone domain.

It belongs to the NrdR family. Zn(2+) serves as cofactor.

In terms of biological role, negatively regulates transcription of bacterial ribonucleotide reductase nrd genes and operons by binding to NrdR-boxes. The protein is Transcriptional repressor NrdR of Streptococcus pyogenes serotype M5 (strain Manfredo).